The primary structure comprises 98 residues: Putative defensin-like protein 239 (98 aa).

The first 23 residues, Met-1 to Gly-23, serve as a signal peptide directing secretion. 4 cysteine pairs are disulfide-bonded: Cys-29-Cys-89, Cys-39-Cys-69, Cys-47-Cys-86, and Cys-67-Cys-88.

The protein belongs to the DEFL family.

The protein resides in the secreted. The sequence is that of Putative defensin-like protein 239 (SCRL17) from Arabidopsis thaliana (Mouse-ear cress).